The following is a 198-amino-acid chain: Phycocyanobilin lyase CpcT homolog (198 aa).

The protein belongs to the CpcT/CpeT biliprotein lyase family.

Its function is as follows. Covalently attaches a chromophore to Cys residue(s) of phycobiliproteins. In vitro is not seen to act as a chromophore lyase for ApcA1, ApcA2, ApcB, ApcD, ApcF, CpcB or PecB, the lyase activity is therefore unsure. The chain is Phycocyanobilin lyase CpcT homolog (cpcT2) from Nostoc sp. (strain PCC 7120 / SAG 25.82 / UTEX 2576).